The chain runs to 110 residues: Small ribosomal subunit protein eS25 (110 aa).

A disordered region spans residues 1-38 (MGGKKKPTLSQLAKKAEKEKAQQAQKAKKEVKKEETPA). The segment covering 14 to 38 (KKAEKEKAQQAQKAKKEVKKEETPA) has biased composition (basic and acidic residues).

Belongs to the eukaryotic ribosomal protein eS25 family.

The polypeptide is Small ribosomal subunit protein eS25 (rps25e) (Pyrobaculum aerophilum (strain ATCC 51768 / DSM 7523 / JCM 9630 / CIP 104966 / NBRC 100827 / IM2)).